Here is a 233-residue protein sequence, read N- to C-terminus: Syntaxin-52 (233 aa).

At 1-209 (MASSSDPWMR…NKSMKSGCSC (209 aa)) the chain is on the cytoplasmic side. Residues 137–199 (RQVMREQDEG…RRVQKSLALM (63 aa)) form the t-SNARE coiled-coil homology domain. Residues 210-230 (MSMLLSVLGIVGLALVIWLLV) form a helical; Anchor for type IV membrane protein membrane-spanning segment. Residues 231–233 (KYL) lie on the Vesicular side of the membrane.

Belongs to the syntaxin family. Interacts either with VTI11 and SYP21, or with VTI11 and SYP22 in the prevacuolar compartment, or with VTI12 and SYP61 in the trans-Golgi network to form t-SNARE complexes. As to expression, expressed in root, leaf, stem, flower and silique.

It is found in the golgi apparatus. The protein resides in the trans-Golgi network membrane. The protein localises to the prevacuolar compartment membrane. Vesicle trafficking protein that functions in the secretory pathway. The sequence is that of Syntaxin-52 (SYP52) from Arabidopsis thaliana (Mouse-ear cress).